The sequence spans 242 residues: Phosphate import ATP-binding protein PstB 1 (242 aa).

The ABC transporter domain maps to 1–237; it reads MDLYYGSYRA…PKDQRTEDYI (237 aa). ATP is bound at residue 28-35; the sequence is GPSGCGKS.

The protein belongs to the ABC transporter superfamily. Phosphate importer (TC 3.A.1.7) family. The complex is composed of two ATP-binding proteins (PstB), two transmembrane proteins (PstC and PstA) and a solute-binding protein (PstS).

The protein resides in the cell membrane. It catalyses the reaction phosphate(out) + ATP + H2O = ADP + 2 phosphate(in) + H(+). Part of the ABC transporter complex PstSACB involved in phosphate import. Responsible for energy coupling to the transport system. This is Phosphate import ATP-binding protein PstB 1 from Symbiobacterium thermophilum (strain DSM 24528 / JCM 14929 / IAM 14863 / T).